Here is a 160-residue protein sequence, read N- to C-terminus: Crossover junction endodeoxyribonuclease RuvC (160 aa).

Residues aspartate 7, glutamate 67, and aspartate 138 contribute to the active site. Aspartate 7, glutamate 67, and aspartate 138 together coordinate Mg(2+).

Belongs to the RuvC family. In terms of assembly, homodimer which binds Holliday junction (HJ) DNA. The HJ becomes 2-fold symmetrical on binding to RuvC with unstacked arms; it has a different conformation from HJ DNA in complex with RuvA. In the full resolvosome a probable DNA-RuvA(4)-RuvB(12)-RuvC(2) complex forms which resolves the HJ. It depends on Mg(2+) as a cofactor.

The protein localises to the cytoplasm. The catalysed reaction is Endonucleolytic cleavage at a junction such as a reciprocal single-stranded crossover between two homologous DNA duplexes (Holliday junction).. In terms of biological role, the RuvA-RuvB-RuvC complex processes Holliday junction (HJ) DNA during genetic recombination and DNA repair. Endonuclease that resolves HJ intermediates. Cleaves cruciform DNA by making single-stranded nicks across the HJ at symmetrical positions within the homologous arms, yielding a 5'-phosphate and a 3'-hydroxyl group; requires a central core of homology in the junction. The consensus cleavage sequence is 5'-(A/T)TT(C/G)-3'. Cleavage occurs on the 3'-side of the TT dinucleotide at the point of strand exchange. HJ branch migration catalyzed by RuvA-RuvB allows RuvC to scan DNA until it finds its consensus sequence, where it cleaves and resolves the cruciform DNA. The sequence is that of Crossover junction endodeoxyribonuclease RuvC from Brachyspira hyodysenteriae (strain ATCC 49526 / WA1).